The following is a 434-amino-acid chain: Protein FAM83A (434 aa).

The tract at residues 1–298 (MSRSRHLGKI…LYASSKPVMG (298 aa)) is DUF1669. The interval 76–97 (REPPCPPDTLGGAEAGPKGLDS) is disordered. Phosphoserine is present on residues serine 301, serine 327, serine 348, and serine 357. The disordered stretch occupies residues 308–399 (VPPGAAPANG…HDGPPAAVYS (92 aa)). Low complexity-rich tracts occupy residues 320 to 332 (SSSSGSASDRTSS) and 348 to 357 (SVSASSGPCS). Over residues 358-369 (PAAPHPPPPPRF) the composition is skewed to pro residues.

Belongs to the FAM83 family. As to quaternary structure, directly interacts (via DUF1669) with casein kinase isoforms CSNK1A1, CSNK1A1L, CSNK1D and CSNK1E. Phosphorylated upon EGFR activation in a breast cancer cell line.

It localises to the cytoplasm. Its function is as follows. Involved in mitochondrial maintenance during adipogenesis. May be acting by playing a role in the maintenance of normal mitochondrial function. The chain is Protein FAM83A from Homo sapiens (Human).